The following is a 274-amino-acid chain: Acetylaranotin bis-thiomethyltransferase (274 aa).

Belongs to the class I-like SAM-binding methyltransferase superfamily.

The protein operates within mycotoxin biosynthesis. Its function is as follows. Acetylaranotin bis-thiomethyltransferase involved in the biosynthesis of acetylaranotin derivatives, members of the epipolythiodioxopiperazine (ETP) class of toxins characterized by a disulfide-bridged cyclic dipeptide. The first step of acetylaranotin biosynthesis is performed by the NRPS ataP which produces diketopiperazine cyclo-L-Phe-L-Phe via the condensation of 2 phenylalanines (L-Phe). The ataC domain of ataTC then catalyzes the formation of bishydroxylation of cyclo-L-Phe-L-Phe. The glutathione S-transferase domain ataG in ataIMG further catalyzes the conjugation of two glutathiones to the bishydroxylated intermediate. Next, the dipeptidase ataJ removes the Glu residues. The following step is performed by the carbon sulfur lyase domain ataI of ataIMG which may convert the bis-cysteinyl adduct to yield an epidithiol intermediate. The ataT domain from ataTC then catalyzes the oxidation of the free dithiols, followed by a cyclization step catalyzed by the cytochrome P450 ataF. AtaF probably acts as an epoxidase to promote a dual epoxidation formation at C8 and C9 along with C8' and C9', followed by the spontaneous nucleophilic attack of the amide nitrogens N10 and N10' to yield an intermediate with the pyrrolidine partial structure. The final steps of acetylaranotin biosynthesis involve the acetylation and ring rearrangement of an epitetrathiodiketopiperazine intermediate to produce acetylaranotin. AtaH probably catalyzes the acetylation of epitetrathiodiketopiperazine to produce a diacetate and ataY is responsible for the formation of the dihydrooxepin moiety that converts the diacetate intermediate to acetylaranotin via acetylapoaranotin. Both enzymes could function independently in the absence of the other. The acetylaranotin bis-thiomethyltransferase ataS located outside of acetylaranotin gene cluster is the main thiomethyltransferase responsible for converting acetylaranotin and its related intermediates to their methylated forms. This chain is Acetylaranotin bis-thiomethyltransferase, found in Aspergillus terreus (strain NIH 2624 / FGSC A1156).